We begin with the raw amino-acid sequence, 198 residues long: Ribonuclease HII (198 aa).

Residues 10–198 form the RNase H type-2 domain; it reads QLVAGVDEVG…PVKRALGLAS (189 aa). The a divalent metal cation site is built by Asp16, Glu17, and Asp108.

The protein belongs to the RNase HII family. Requires Mn(2+) as cofactor. Mg(2+) is required as a cofactor.

It is found in the cytoplasm. The enzyme catalyses Endonucleolytic cleavage to 5'-phosphomonoester.. Endonuclease that specifically degrades the RNA of RNA-DNA hybrids. The protein is Ribonuclease HII of Shigella boydii serotype 4 (strain Sb227).